A 60-amino-acid polypeptide reads, in one-letter code: UPF0434 protein Mfla_2088 (60 aa).

This sequence belongs to the UPF0434 family.

The sequence is that of UPF0434 protein Mfla_2088 from Methylobacillus flagellatus (strain ATCC 51484 / DSM 6875 / VKM B-1610 / KT).